A 24-amino-acid chain; its full sequence is ANTVKVTLIKSTNGRLANHKAXVK.

The protein belongs to the universal ribosomal protein uL30 family. In terms of assembly, part of the 50S ribosomal subunit.

The polypeptide is Large ribosomal subunit protein uL30 (rpmD) (Ectopseudomonas mendocina (Pseudomonas mendocina)).